Reading from the N-terminus, the 487-residue chain is Cysteine--tRNA ligase (487 aa).

Zn(2+) is bound at residue Cys-29. The 'HIGH' region signature appears at 31-41 (VTVYDYNHVGH). Positions 209, 234, and 238 each coordinate Zn(2+). Positions 266–270 (KMSKS) match the 'KMSKS' region motif. Lys-269 contributes to the ATP binding site.

It belongs to the class-I aminoacyl-tRNA synthetase family. As to quaternary structure, monomer. Requires Zn(2+) as cofactor.

Its subcellular location is the cytoplasm. It catalyses the reaction tRNA(Cys) + L-cysteine + ATP = L-cysteinyl-tRNA(Cys) + AMP + diphosphate. This Sulfurihydrogenibium sp. (strain YO3AOP1) protein is Cysteine--tRNA ligase.